The following is a 364-amino-acid chain: Aminomethyltransferase (364 aa).

The protein belongs to the GcvT family. As to quaternary structure, the glycine cleavage system is composed of four proteins: P, T, L and H.

It catalyses the reaction N(6)-[(R)-S(8)-aminomethyldihydrolipoyl]-L-lysyl-[protein] + (6S)-5,6,7,8-tetrahydrofolate = N(6)-[(R)-dihydrolipoyl]-L-lysyl-[protein] + (6R)-5,10-methylene-5,6,7,8-tetrahydrofolate + NH4(+). Its function is as follows. The glycine cleavage system catalyzes the degradation of glycine. This chain is Aminomethyltransferase, found in Escherichia coli (strain SMS-3-5 / SECEC).